Consider the following 325-residue polypeptide: MTKSQQKVSSIEKLSNQEGIISALAFDQRGALKRMMAEHQSETPTVEQIEQLKVLVSEELTQYASSILLDPEYGLPASDARNNDCGLLLAYEKTGYDVNAKGRLPDCLVEWSAKRLKEQGANAVKFLLYYDVDDTEEINIQKKAYIERIGSECVAEDIPFFLEVLTYDDNIPDNKSAEFAKVKPRKVNEAMKLFSEDCFNVDVLKVEVPVNMNFVEGFSEGEVVYTKEEAAQHFRDQDAATHLPYIYLSAGVSAELFQDTLKFAHDSGAQFNGVLCGRATWSGAVKVYIEEGEQAAREWLRTVGFKNIDDLNTVLKTTATSWKNK.

This sequence belongs to the aldolase LacD family.

It carries out the reaction D-tagatofuranose 1,6-bisphosphate = D-glyceraldehyde 3-phosphate + dihydroxyacetone phosphate. Its pathway is carbohydrate metabolism; D-tagatose 6-phosphate degradation; D-glyceraldehyde 3-phosphate and glycerone phosphate from D-tagatose 6-phosphate: step 2/2. In Staphylococcus epidermidis (strain ATCC 12228 / FDA PCI 1200), this protein is Tagatose 1,6-diphosphate aldolase.